The chain runs to 137 residues: Small ribosomal subunit protein uS11 (137 aa).

A disordered region spans residues 116-137 (EDVTPIPHDGTRPKGGRRGRRV).

The protein belongs to the universal ribosomal protein uS11 family. Part of the 30S ribosomal subunit.

In terms of biological role, located on the platform of the 30S subunit. This chain is Small ribosomal subunit protein uS11, found in Pyrococcus abyssi (strain GE5 / Orsay).